The sequence spans 410 residues: Phytoene synthase 1, chloroplastic (410 aa).

The transit peptide at 1 to 62 (MAIILVRAAS…EAGRPSPAVY (62 aa)) directs the protein to the chloroplast.

This sequence belongs to the phytoene/squalene synthase family. As to quaternary structure, monomer. As to expression, expressed in embryos, endosperm and seedling leaves. Expressed in leaves and endosperm.

It localises to the plastid. The protein localises to the chloroplast stroma. The catalysed reaction is 2 (2E,6E,10E)-geranylgeranyl diphosphate = 15-cis-phytoene + 2 diphosphate. It participates in carotenoid biosynthesis; phytoene biosynthesis; all-trans-phytoene from geranylgeranyl diphosphate: step 1/1. Functionally, catalyzes the conversion of geranylgeranyl diphosphate to phytoene. Mediates the first committed step in carotenoid biosynthesis. The chain is Phytoene synthase 1, chloroplastic from Zea mays (Maize).